Reading from the N-terminus, the 387-residue chain is MTVSELNEQAKSLLESHFPSIEVVGEISRFTRQPTSGHWYFTLKDEKASISCAMFKSTALRVKFIPKDGLKVIITGKVSIYSPTGNYQIIAASMKLAGEGELEAKFSALKQKLSDEGLFAEEYKKPLPKFPQKIAFLTSLSSAAYQDMLRVARDRFALVKIDAYSVFVQGENTASSVISALKTADKKDYDCIIIARGGGSKEDLWGFNDENLARAIFAAHTPVISAIGHEIDFSISDFVADHRSLTPTAAMMDLLPDVNTLLQDLSGADNFLINFINSCFKKCENALNVANLSLKTKSVDSKILKFENDLREGESKLENFIKFRLSNFENRLNLNTQILKSKAKFFEITKNLVSISKDGKIVKLKDLKSGDNFEISSQEISKQAKIL.

It belongs to the XseA family. Heterooligomer composed of large and small subunits.

Its subcellular location is the cytoplasm. It carries out the reaction Exonucleolytic cleavage in either 5'- to 3'- or 3'- to 5'-direction to yield nucleoside 5'-phosphates.. Its function is as follows. Bidirectionally degrades single-stranded DNA into large acid-insoluble oligonucleotides, which are then degraded further into small acid-soluble oligonucleotides. The sequence is that of Exodeoxyribonuclease 7 large subunit from Campylobacter hominis (strain ATCC BAA-381 / DSM 21671 / CCUG 45161 / LMG 19568 / NCTC 13146 / CH001A).